The primary structure comprises 618 residues: Serine/threonine-protein kinase pkn1 (618 aa).

In terms of domain architecture, Protein kinase spans 15 to 381; sequence YKILCYLRKG…KEEVKPQPLF (367 aa). ATP is bound by residues 21–29 and Lys44; that span reads LRKGLWCQD.

The protein belongs to the protein kinase superfamily. Ser/Thr protein kinase family. In terms of processing, autophosphorylated on serine and threonine residues.

The catalysed reaction is L-seryl-[protein] + ATP = O-phospho-L-seryl-[protein] + ADP + H(+). It catalyses the reaction L-threonyl-[protein] + ATP = O-phospho-L-threonyl-[protein] + ADP + H(+). Functionally, together with the serine/threonine kinase PknD, may play a role in the specific interactions with host proteins during intracellular growth. The protein is Serine/threonine-protein kinase pkn1 (pkn1) of Chlamydia caviae (strain ATCC VR-813 / DSM 19441 / 03DC25 / GPIC) (Chlamydophila caviae).